The chain runs to 247 residues: OCIA domain-containing protein 1 (247 aa).

The OCIA domain maps to 1–112 (MNGRADFREP…KKLENSPLGE (112 aa)). Phosphoserine is present on residues Ser-108 and Ser-116. The tract at residues 116–247 (SGELRRSLPP…VNKYGDTWDE (132 aa)) is disordered. Polar residues-rich tracts occupy residues 136-146 (SNVSGQSSFGT) and 168-177 (ASMNESTPTG). 2 stretches are compositionally biased toward basic and acidic residues: residues 192–210 (DSPKRKSVTYEELRNKNRE) and 218–240 (HKTDPSVRPMQERGPQKEVKVNK). Residues Ser-193 and Ser-198 each carry the phosphoserine modification.

It belongs to the OCIAD1 family. As to quaternary structure, interacts with OCIAD2. Interacts with STAT3.

Its subcellular location is the endosome. Its function is as follows. Maintains stem cell potency. Increases STAT3 phosphorylation and controls ERK phosphorylation. May act as a scaffold, increasing STAT3 recruitment onto endosomes. The chain is OCIA domain-containing protein 1 from Rattus norvegicus (Rat).